Reading from the N-terminus, the 263-residue chain is Ribonuclease HII (263 aa).

One can recognise an RNase H type-2 domain in the interval 71–262 (QAIAGIDEVG…VKSMCCDSTN (192 aa)). A divalent metal cation contacts are provided by D77, E78, and D172.

The protein belongs to the RNase HII family. Mn(2+) is required as a cofactor. The cofactor is Mg(2+).

The protein localises to the cytoplasm. It carries out the reaction Endonucleolytic cleavage to 5'-phosphomonoester.. Functionally, endonuclease that specifically degrades the RNA of RNA-DNA hybrids. The protein is Ribonuclease HII of Streptococcus pyogenes serotype M5 (strain Manfredo).